The primary structure comprises 192 residues: Threonylcarbamoyl-AMP synthase (192 aa).

A YrdC-like domain is found at 5-192 (TTSVAEAAHC…DATTGRVIRD (188 aa)).

The protein belongs to the SUA5 family. TsaC subfamily.

It localises to the cytoplasm. It catalyses the reaction L-threonine + hydrogencarbonate + ATP = L-threonylcarbamoyladenylate + diphosphate + H2O. In terms of biological role, required for the formation of a threonylcarbamoyl group on adenosine at position 37 (t(6)A37) in tRNAs that read codons beginning with adenine. Catalyzes the conversion of L-threonine, HCO(3)(-)/CO(2) and ATP to give threonylcarbamoyl-AMP (TC-AMP) as the acyladenylate intermediate, with the release of diphosphate. In Acinetobacter baylyi (strain ATCC 33305 / BD413 / ADP1), this protein is Threonylcarbamoyl-AMP synthase.